The chain runs to 123 residues: Protein Wnt-3b (123 aa).

Ser-1 carries the O-palmitoleoyl serine; by PORCN lipid modification. Cys-89 and Cys-104 are disulfide-bonded. A glycan (N-linked (GlcNAc...) asparagine) is linked at Asn-90.

This sequence belongs to the Wnt family. Post-translationally, palmitoleoylation is required for efficient binding to frizzled receptors. Depalmitoleoylation leads to Wnt signaling pathway inhibition.

It is found in the secreted. The protein resides in the extracellular space. It localises to the extracellular matrix. Functionally, ligand for members of the frizzled family of seven transmembrane receptors. Probable developmental protein. May be a signaling molecule which affects the development of discrete regions of tissues. Is likely to signal over only few cell diameters. The protein is Protein Wnt-3b (WNT-3B) of Plethodon jordani (Red-cheeked salamander).